The chain runs to 261 residues: Thioesterase AMT4 (261 aa).

The protein belongs to the AMT4 thioesterase family.

It functions in the pathway mycotoxin biosynthesis. In terms of biological role, thioesterase; part of the gene clusters that mediate the biosynthesis of AM-toxins, host-selective toxins (HSTs) causing Alternaria blotch on apple, a worldwide distributed disease. AM-toxins are cyclic depsipeptides containing the 3 residues 2-hydroxy-isovaleric acid (2-HIV), dehydroalanine, L-alanine which are common for all 3 AM-toxins I to III. The fourth precursor is L-alpha-amino-methoxyphenyl-valeric acid (L-Amv) for AM-toxin I, L-alpha-amino-phenyl-valeric acid (L-Apv) for AM-toxin II, and L-alpha-amino-hydroxyphenyl-valeric acid (L-Ahv) for AM-toxin III. AM-toxins have two target sites for affecting susceptible apple cells; they cause invagination of the plasma membrane and electrolyte loss and chloroplast disorganization. The non-ribosomal peptide synthetase AMT1 contains 4 catalytic modules and is responsible for activation of each residue in AM-toxin. The aldo-keto reductase AMT2 catalyzes the conversion of 2-keto-isovaleric acid (2-KIV) to 2-hydroxy-isovaleric acid (2-HIV), one of the precursor residues incorporated by AMT1 during AM-toxin biosynthesis, by reduction of its ketone to an alcohol. The cytochrome P450 monooxygenase AMT3 and the thioesterase AMT4 are also important for AM-toxin production, but their exact function within the AM-toxin biosynthesis are not known yet. Up to 21 proteins (including AMT1 to AMT4) are predicted to be involved in AM-toxin biosynthesis since their expression ishighly up-regulated in AM-toxin-producing cultures. This Alternaria alternata (Alternaria rot fungus) protein is Thioesterase AMT4.